Here is a 207-residue protein sequence, read N- to C-terminus: Outer-membrane lipoprotein LolB (207 aa).

The signal sequence occupies residues Met1–Ala21. A lipid anchor (N-palmitoyl cysteine) is attached at Cys22. A lipid anchor (S-diacylglycerol cysteine) is attached at Cys22.

This sequence belongs to the LolB family. As to quaternary structure, monomer.

The protein localises to the cell outer membrane. Plays a critical role in the incorporation of lipoproteins in the outer membrane after they are released by the LolA protein. The polypeptide is Outer-membrane lipoprotein LolB (Escherichia coli (strain K12 / MC4100 / BW2952)).